The following is a 419-amino-acid chain: UDP-N-acetylglucosamine 1-carboxyvinyltransferase (419 aa).

A phosphoenolpyruvate-binding site is contributed by 22–23 (KN). Residue Arg-93 coordinates UDP-N-acetyl-alpha-D-glucosamine. The active-site Proton donor is the Cys-117. A 2-(S-cysteinyl)pyruvic acid O-phosphothioketal modification is found at Cys-117. Residues 122-126 (RPVDL), Asp-308, and Ile-330 each bind UDP-N-acetyl-alpha-D-glucosamine.

The protein belongs to the EPSP synthase family. MurA subfamily.

The protein localises to the cytoplasm. It carries out the reaction phosphoenolpyruvate + UDP-N-acetyl-alpha-D-glucosamine = UDP-N-acetyl-3-O-(1-carboxyvinyl)-alpha-D-glucosamine + phosphate. The protein operates within cell wall biogenesis; peptidoglycan biosynthesis. Its function is as follows. Cell wall formation. Adds enolpyruvyl to UDP-N-acetylglucosamine. The polypeptide is UDP-N-acetylglucosamine 1-carboxyvinyltransferase (Pseudomonas putida (Arthrobacter siderocapsulatus)).